The following is a 224-amino-acid chain: Urease accessory protein UreF (224 aa).

This sequence belongs to the UreF family. As to quaternary structure, ureD, UreF and UreG form a complex that acts as a GTP-hydrolysis-dependent molecular chaperone, activating the urease apoprotein by helping to assemble the nickel containing metallocenter of UreC. The UreE protein probably delivers the nickel.

It localises to the cytoplasm. In terms of biological role, required for maturation of urease via the functional incorporation of the urease nickel metallocenter. This chain is Urease accessory protein UreF, found in Pseudomonas putida (strain GB-1).